Reading from the N-terminus, the 116-residue chain is Large ribosomal subunit protein bL19 (116 aa).

This sequence belongs to the bacterial ribosomal protein bL19 family.

In terms of biological role, this protein is located at the 30S-50S ribosomal subunit interface and may play a role in the structure and function of the aminoacyl-tRNA binding site. In Solidesulfovibrio magneticus (strain ATCC 700980 / DSM 13731 / RS-1) (Desulfovibrio magneticus), this protein is Large ribosomal subunit protein bL19.